A 500-amino-acid chain; its full sequence is Lysine--tRNA ligase (500 aa).

Residues Glu410 and Glu417 each contribute to the Mg(2+) site.

Belongs to the class-II aminoacyl-tRNA synthetase family. As to quaternary structure, homodimer. The cofactor is Mg(2+).

It localises to the cytoplasm. The enzyme catalyses tRNA(Lys) + L-lysine + ATP = L-lysyl-tRNA(Lys) + AMP + diphosphate. The sequence is that of Lysine--tRNA ligase from Shewanella piezotolerans (strain WP3 / JCM 13877).